Here is a 258-residue protein sequence, read N- to C-terminus: UPF0246 protein ETA_07010 (258 aa).

Belongs to the UPF0246 family.

The protein is UPF0246 protein ETA_07010 of Erwinia tasmaniensis (strain DSM 17950 / CFBP 7177 / CIP 109463 / NCPPB 4357 / Et1/99).